The chain runs to 269 residues: Ribosomal RNA small subunit methyltransferase A (269 aa).

6 residues coordinate S-adenosyl-L-methionine: Asn-20, Leu-22, Gly-47, Glu-68, Asp-90, and Asn-110.

Belongs to the class I-like SAM-binding methyltransferase superfamily. rRNA adenine N(6)-methyltransferase family. RsmA subfamily.

It is found in the cytoplasm. It catalyses the reaction adenosine(1518)/adenosine(1519) in 16S rRNA + 4 S-adenosyl-L-methionine = N(6)-dimethyladenosine(1518)/N(6)-dimethyladenosine(1519) in 16S rRNA + 4 S-adenosyl-L-homocysteine + 4 H(+). Functionally, specifically dimethylates two adjacent adenosines (A1518 and A1519) in the loop of a conserved hairpin near the 3'-end of 16S rRNA in the 30S particle. May play a critical role in biogenesis of 30S subunits. This chain is Ribosomal RNA small subunit methyltransferase A, found in Chlorobium phaeobacteroides (strain DSM 266 / SMG 266 / 2430).